We begin with the raw amino-acid sequence, 384 residues long: Chorismate synthase (384 aa).

Positions 40 and 46 each coordinate NADP(+). FMN is bound by residues 128-130 (RAS), Gly292, 307-311 (KPIPT), and Arg333.

Belongs to the chorismate synthase family. As to quaternary structure, homotetramer. FMNH2 serves as cofactor.

The catalysed reaction is 5-O-(1-carboxyvinyl)-3-phosphoshikimate = chorismate + phosphate. It participates in metabolic intermediate biosynthesis; chorismate biosynthesis; chorismate from D-erythrose 4-phosphate and phosphoenolpyruvate: step 7/7. Catalyzes the anti-1,4-elimination of the C-3 phosphate and the C-6 proR hydrogen from 5-enolpyruvylshikimate-3-phosphate (EPSP) to yield chorismate, which is the branch point compound that serves as the starting substrate for the three terminal pathways of aromatic amino acid biosynthesis. This reaction introduces a second double bond into the aromatic ring system. The polypeptide is Chorismate synthase (Carboxydothermus hydrogenoformans (strain ATCC BAA-161 / DSM 6008 / Z-2901)).